The chain runs to 241 residues: Endodeoxyribonuclease NucC (241 aa).

Active-site residues include Asp-73, Glu-104, and Lys-106. 2 residues coordinate Mg(2+): Asp-73 and Glu-104.

This sequence belongs to the NucC endonuclease family. As to quaternary structure, self-oligomerizes. Forms homotrimers; in the presence of cAAA the trimers associate face-to-face to form homohexamers. The 2 cAAA-binding sites are on the exterior of the hexamer at the three-way junction, there are maximally 2 cyclic nucleotides per hexamer. Mg(2+) is required as a cofactor.

Activated by cAAA and to a lesser extent cAA; both cyclic nucleotides are products of its cognate CD-NTase. Cyclic nucleotide binding causes hexamerization. Functionally, effector DNase of a CBASS antivirus system. CBASS (cyclic oligonucleotide-based antiphage signaling system) provides immunity against bacteriophage. The CD-NTase protein synthesizes cyclic nucleotides in response to infection; these serve as specific second messenger signals. The signals activate a diverse range of effectors, leading to bacterial cell death and thus abortive phage infection. A type III-C(AAA) CBASS system. A cyclic nucleotide-activated dsDNase. In the presence of 3',3',3'-cyclic AMP-AMP-AMP (cAAA) and to a lesser extent cyclic-di-AMP (c-di-AMP), endonucleolytically degrades dsDNA. Binds one cAAA in a pocket on one surface of the trimer; cAAA binding promotes hexamerization which is probably necessary for nuclease activation. The nuclease digests dsDNA to about 50 bp lengths. DNA has been modeled to contact a pair of juxtaposed active sites (one from each layer of the hexamer), accounting for cleavage on both strands. The sequence is that of Endodeoxyribonuclease NucC from Pseudomonas aeruginosa.